The chain runs to 262 residues: MINVESPLNLETTLGSLQFSHGSVQNIGMSISMIIGCELGDKSFIVTALLAYQYGRASVFFGSYLALFFMTSFAVLVGRAAPFLFPKSITHILGGTLFLIFGVKMLKESKEVRESQQSLENEFDKVEKIIVNEEDMKKTLELGLPASNRSSSTLKDKFFKVFSMSCFKNLFSKKFSRAFIKAFALIFVSELGDRSQIATIVMSAKEKVLDVFIGVNIGHMLCTMVAVIVGRYISNKIEMYKVLFFGGIVFMIFGILYIFQGF.

The next 5 membrane-spanning stretches (helical) occupy residues 31 to 51, 57 to 77, 83 to 103, 208 to 228, and 242 to 262; these read ISMI…ALLA, ASVF…AVLV, FLFP…IFGV, VLDV…VAVI, and VLFF…FQGF.

It belongs to the GDT1 family.

The protein resides in the endoplasmic reticulum membrane. The polypeptide is GDT1-like protein C186.05c (Schizosaccharomyces pombe (strain 972 / ATCC 24843) (Fission yeast)).